The primary structure comprises 229 residues: Potassium/proton antiporter CemA (229 aa).

3 consecutive transmembrane segments (helical) span residues 7–27, 107–127, and 189–209; these read FTPL…SLLF, ILHF…SILG, and IISG…KYWI.

Belongs to the CemA family.

It is found in the plastid. Its subcellular location is the chloroplast inner membrane. It carries out the reaction K(+)(in) + H(+)(out) = K(+)(out) + H(+)(in). In terms of biological role, contributes to K(+)/H(+) antiport activity by supporting proton efflux to control proton extrusion and homeostasis in chloroplasts in a light-dependent manner to modulate photosynthesis. Prevents excessive induction of non-photochemical quenching (NPQ) under continuous-light conditions. Indirectly promotes efficient inorganic carbon uptake into chloroplasts. This is Potassium/proton antiporter CemA from Helianthus annuus (Common sunflower).